The following is a 246-amino-acid chain: Purine nucleoside phosphorylase Cgl2154/cg2365 (246 aa).

3 residues coordinate Zn(2+): H68, C107, and H124.

This sequence belongs to the purine nucleoside phosphorylase YfiH/LACC1 family. As to quaternary structure, homodimer. Cu(2+) serves as cofactor. Zn(2+) is required as a cofactor.

The enzyme catalyses adenosine + phosphate = alpha-D-ribose 1-phosphate + adenine. It catalyses the reaction S-methyl-5'-thioadenosine + phosphate = 5-(methylsulfanyl)-alpha-D-ribose 1-phosphate + adenine. It carries out the reaction inosine + phosphate = alpha-D-ribose 1-phosphate + hypoxanthine. The catalysed reaction is adenosine + H2O + H(+) = inosine + NH4(+). In terms of biological role, purine nucleoside enzyme that catalyzes the phosphorolysis of adenosine and inosine nucleosides, yielding D-ribose 1-phosphate and the respective free bases, adenine and hypoxanthine. Also catalyzes the phosphorolysis of S-methyl-5'-thioadenosine into adenine and S-methyl-5-thio-alpha-D-ribose 1-phosphate. Also has adenosine deaminase activity. The polypeptide is Purine nucleoside phosphorylase Cgl2154/cg2365 (Corynebacterium glutamicum (strain ATCC 13032 / DSM 20300 / JCM 1318 / BCRC 11384 / CCUG 27702 / LMG 3730 / NBRC 12168 / NCIMB 10025 / NRRL B-2784 / 534)).